The following is a 109-amino-acid chain: Parvalbumin beta (109 aa).

Ser1 bears the N-acetylserine mark. EF-hand domains lie at 38–73 (KTPDVIKKAFYVIDQDKSGFIEEDELKLFLQNFASS) and 77–109 (LTDKETETFLKAGDSDGDGKIGIDEFADLVKEA). Asp51, Asp53, Ser55, Phe57, Glu59, Glu62, Asp90, Asp92, Asp94, Lys96, and Glu101 together coordinate Ca(2+).

This sequence belongs to the parvalbumin family.

Functionally, in muscle, parvalbumin is thought to be involved in relaxation after contraction. It binds two calcium ions. The chain is Parvalbumin beta from Opsanus tau (Oyster toadfish).